Consider the following 184-residue polypeptide: NADH-quinone oxidoreductase subunit B (184 aa).

The [4Fe-4S] cluster site is built by Cys-63, Cys-64, Cys-128, and Cys-158.

The protein belongs to the complex I 20 kDa subunit family. NDH-1 is composed of 14 different subunits. Subunits NuoB, C, D, E, F, and G constitute the peripheral sector of the complex. Requires [4Fe-4S] cluster as cofactor.

It is found in the cell inner membrane. It carries out the reaction a quinone + NADH + 5 H(+)(in) = a quinol + NAD(+) + 4 H(+)(out). Functionally, NDH-1 shuttles electrons from NADH, via FMN and iron-sulfur (Fe-S) centers, to quinones in the respiratory chain. Couples the redox reaction to proton translocation (for every two electrons transferred, four hydrogen ions are translocated across the cytoplasmic membrane), and thus conserves the redox energy in a proton gradient. The polypeptide is NADH-quinone oxidoreductase subunit B (Xylella fastidiosa (strain 9a5c)).